The primary structure comprises 358 residues: DNA ligase C (358 aa).

The active-site N6-AMP-lysine intermediate is Lys-29.

The protein belongs to the ATP-dependent DNA ligase family. A divalent metal cation is required as a cofactor.

The enzyme catalyses ATP + (deoxyribonucleotide)n-3'-hydroxyl + 5'-phospho-(deoxyribonucleotide)m = (deoxyribonucleotide)n+m + AMP + diphosphate.. DNA ligase that seals nicks in double-stranded DNA during DNA replication, DNA recombination and DNA repair. The polypeptide is DNA ligase C (ligC) (Mycobacterium tuberculosis (strain ATCC 25618 / H37Rv)).